Consider the following 447-residue polypeptide: Argininosuccinate synthase (447 aa).

ATP is bound by residues 20–28 (AFSGGLDTS) and A46. Y102 serves as a coordination point for L-citrulline. ATP-binding residues include G132 and T134. Positions 134, 138, and 139 each coordinate L-aspartate. An L-citrulline-binding site is contributed by N138. Residue D139 coordinates ATP. L-citrulline contacts are provided by R142 and S195. D197 contacts ATP. L-citrulline contacts are provided by T204, E206, and E283.

It belongs to the argininosuccinate synthase family. Type 2 subfamily. In terms of assembly, homotetramer.

It is found in the cytoplasm. The catalysed reaction is L-citrulline + L-aspartate + ATP = 2-(N(omega)-L-arginino)succinate + AMP + diphosphate + H(+). It functions in the pathway amino-acid biosynthesis; L-arginine biosynthesis; L-arginine from L-ornithine and carbamoyl phosphate: step 2/3. This chain is Argininosuccinate synthase (argG), found in Neisseria meningitidis serogroup B (strain ATCC BAA-335 / MC58).